Consider the following 448-residue polypeptide: tRNA-2-methylthio-N(6)-dimethylallyladenosine synthase (448 aa).

The 119-residue stretch at 2–120 folds into the MTTase N-terminal domain; sequence KKYRIIVFGC…LPELIGKVIE (119 aa). Residues Cys11, Cys47, Cys81, Cys158, Cys162, and Cys165 each contribute to the [4Fe-4S] cluster site. One can recognise a Radical SAM core domain in the interval 144–374; that stretch reads RKEGVRAWVT…IKLQNKISLE (231 aa). One can recognise a TRAM domain in the interval 377–440; it reads EEEVGQTQEV…LAHLTGILSY (64 aa).

Belongs to the methylthiotransferase family. MiaB subfamily. As to quaternary structure, monomer. The cofactor is [4Fe-4S] cluster.

It is found in the cytoplasm. The enzyme catalyses N(6)-dimethylallyladenosine(37) in tRNA + (sulfur carrier)-SH + AH2 + 2 S-adenosyl-L-methionine = 2-methylsulfanyl-N(6)-dimethylallyladenosine(37) in tRNA + (sulfur carrier)-H + 5'-deoxyadenosine + L-methionine + A + S-adenosyl-L-homocysteine + 2 H(+). Its function is as follows. Catalyzes the methylthiolation of N6-(dimethylallyl)adenosine (i(6)A), leading to the formation of 2-methylthio-N6-(dimethylallyl)adenosine (ms(2)i(6)A) at position 37 in tRNAs that read codons beginning with uridine. The protein is tRNA-2-methylthio-N(6)-dimethylallyladenosine synthase of Pelotomaculum thermopropionicum (strain DSM 13744 / JCM 10971 / SI).